Here is a 306-residue protein sequence, read N- to C-terminus: Pantothenate kinase (306 aa).

91 to 98 (GSVAVGKS) provides a ligand contact to ATP.

This sequence belongs to the prokaryotic pantothenate kinase family.

It is found in the cytoplasm. The enzyme catalyses (R)-pantothenate + ATP = (R)-4'-phosphopantothenate + ADP + H(+). The protein operates within cofactor biosynthesis; coenzyme A biosynthesis; CoA from (R)-pantothenate: step 1/5. This Streptococcus pneumoniae (strain 70585) protein is Pantothenate kinase.